The chain runs to 142 residues: ATP synthase epsilon chain (142 aa).

This sequence belongs to the ATPase epsilon chain family. F-type ATPases have 2 components, CF(1) - the catalytic core - and CF(0) - the membrane proton channel. CF(1) has five subunits: alpha(3), beta(3), gamma(1), delta(1), epsilon(1). CF(0) has three main subunits: a, b and c.

The protein localises to the cell inner membrane. Produces ATP from ADP in the presence of a proton gradient across the membrane. This is ATP synthase epsilon chain from Histophilus somni (strain 2336) (Haemophilus somnus).